A 122-amino-acid chain; its full sequence is Large ribosomal subunit protein uL14 (122 aa).

This sequence belongs to the universal ribosomal protein uL14 family. In terms of assembly, part of the 50S ribosomal subunit. Forms a cluster with proteins L3 and L19. In the 70S ribosome, L14 and L19 interact and together make contacts with the 16S rRNA in bridges B5 and B8.

In terms of biological role, binds to 23S rRNA. Forms part of two intersubunit bridges in the 70S ribosome. This Trichodesmium erythraeum (strain IMS101) protein is Large ribosomal subunit protein uL14.